A 398-amino-acid chain; its full sequence is Basic helix-loop-helix neural transcription factor TAP (398 aa).

2 disordered regions span residues 35 to 59 (ETEA…IPQP) and 102 to 144 (RATN…RSRS). Residues 127-141 (RPKRKYAVGKNRVTR) are compositionally biased toward basic residues. Residues 154-206 (FRRMKANDRERNRMHNLNDALEKLRVTLPSLPEETKLTKIEILRFAHNYIFAL) enclose the bHLH domain. 2 disordered regions span residues 265–333 (AQHQ…QQFS) and 361–398 (QQSS…APQV). Positions 307-333 (HQQQQQPHQPHHLQPNPQQESSPQQFS) are enriched in low complexity. Residues 361–370 (QQSSFYSQTP) show a composition bias toward polar residues.

Expressed in neuronal and glial precursors during differentiation. In the peripheral nervous system, expression is exclusively in one of the neurons that innervate each larval chemosensory organ. Expressed at a late stage in the development of one type of adult chemosensory organ, the gustatory bristles of the leg, wing and proboscis. Expressed very early in the development of a second type of chemosensory receptors, the olfactory organs of the antenna.

It is found in the nucleus. May play a role in the specification of the sugar-sensitive adult gustatory neuron and affect the response to sugar and salt. Regulated by POXN. The polypeptide is Basic helix-loop-helix neural transcription factor TAP (tap) (Drosophila melanogaster (Fruit fly)).